The chain runs to 359 residues: Phospho-N-acetylmuramoyl-pentapeptide-transferase (359 aa).

The next 10 membrane-spanning stretches (helical) occupy residues 27–47 (GAFF…INAL), 70–90 (TPTM…LLWA), 97–117 (VWLV…DDWA), 133–153 (LAIG…VHPE), 167–187 (VLLN…VGSA), 198–218 (GLAI…AYAV), 238–258 (LLIF…YNAP), 261–281 (AVFM…AIAV), 287–307 (IVLA…IVQV), and 336–356 (QVVI…LATL).

The protein belongs to the glycosyltransferase 4 family. MraY subfamily. Requires Mg(2+) as cofactor.

It localises to the cell inner membrane. The catalysed reaction is UDP-N-acetyl-alpha-D-muramoyl-L-alanyl-gamma-D-glutamyl-meso-2,6-diaminopimeloyl-D-alanyl-D-alanine + di-trans,octa-cis-undecaprenyl phosphate = di-trans,octa-cis-undecaprenyl diphospho-N-acetyl-alpha-D-muramoyl-L-alanyl-D-glutamyl-meso-2,6-diaminopimeloyl-D-alanyl-D-alanine + UMP. The protein operates within cell wall biogenesis; peptidoglycan biosynthesis. Its function is as follows. Catalyzes the initial step of the lipid cycle reactions in the biosynthesis of the cell wall peptidoglycan: transfers peptidoglycan precursor phospho-MurNAc-pentapeptide from UDP-MurNAc-pentapeptide onto the lipid carrier undecaprenyl phosphate, yielding undecaprenyl-pyrophosphoryl-MurNAc-pentapeptide, known as lipid I. The polypeptide is Phospho-N-acetylmuramoyl-pentapeptide-transferase (Jannaschia sp. (strain CCS1)).